The chain runs to 3131 residues: Enniatin synthase (3131 aa).

The tract at residues 53–466 (ADDKQRAVGH…VEKVDMMTQE (414 aa)) is condensation 1. A disordered region spans residues 186–212 (NDEHPRQFETPDSSQATPEEDLQPNPS). The interval 495–887 (SQSPNKAAVA…GRMDSQVKIR (393 aa)) is adenylation 1. Residues 1010–1086 (SSGTDTYTKL…GLKAIVIGTS (77 aa)) form the Carrier 1 domain. O-(pantetheine 4'-phosphoryl)serine is present on serine 1047. The interval 1105–1534 (SYAQNRMWFL…ETCISVLPLT (430 aa)) is condensation 2. The adenylation 2 stretch occupies residues 1563–1960 (FREQAAANPE…GRMDNQFKIR (398 aa)). The S-adenosyl-L-methionine-dependent N-methyltransferase stretch occupies residues 2021–2177 (EGWQDHFESG…YLAEVIDGLI (157 aa)). 2 Carrier domains span residues 2504–2578 (FPIS…RQGL) and 2598–2671 (APRT…ESSH). Serine 2538 and serine 2632 each carry O-(pantetheine 4'-phosphoryl)serine. The segment at 2718-3123 (QDVYPSTQMQ…RHVLEEVCKT (406 aa)) is condensation 3.

This sequence belongs to the ATP-dependent AMP-binding enzyme family. The cofactor is pantetheine 4'-phosphate. In terms of processing, the N-terminus is blocked.

It functions in the pathway antibiotic biosynthesis; enniatin biosynthesis. Its activity is regulated as follows. The N-methylation activity is inhibited by S-adenosyl-L-homocysteine and sinefugin. Functionally, nonribosomal peptide synthetase that synthesizes enniatin by coupling three D-hydroxycarboxylic acids and three L-amino acids via amide and ester bonds in an alternating fashion. Whereas ESYN1 can accept different amino acids as precursors (L -valine, L-isoleucine or L-leucine), only one species of D-hydroxycarboxylic acid can be found in natural enniatin isolates (D-hydroxyisovaleric acid, D-Hiv). D-Hiv stems from L-valine deanimation by a valine aminotransferase to 2-keto-isovaleric acid (2-Kiv), which becomes subsequently reduced by a keto-isovaleric acid reductase (KivR) to D-Hiv. Peptide bond formation and N-methylation of the amino acid occur before three enzyme-bound dipeptidols are condensed to a hexapeptidol. This is Enniatin synthase from Fusarium equiseti (Fusarium scirpi).